Here is a 261-residue protein sequence, read N- to C-terminus: NAD-capped RNA hydrolase NudC (261 aa).

Arg-74 is a substrate binding site. Positions 103, 106, 121, and 124 each coordinate Zn(2+). Tyr-129 is a substrate binding site. Positions 130 to 253 (PRIFPCIIVA…TIARALIEQT (124 aa)) constitute a Nudix hydrolase domain. Ala-163, Glu-179, and Glu-183 together coordinate a divalent metal cation. A Nudix box motif is present at residues 164 to 185 (GFVEVGETLEQCVAREVKEETG). 197–204 (QPWAFPSS) is a binding site for substrate. Glu-224 contributes to the a divalent metal cation binding site. Ala-246 is a substrate binding site.

This sequence belongs to the Nudix hydrolase family. NudC subfamily. In terms of assembly, homodimer. The cofactor is Mg(2+). It depends on Mn(2+) as a cofactor. Requires Zn(2+) as cofactor.

The catalysed reaction is a 5'-end NAD(+)-phospho-ribonucleoside in mRNA + H2O = a 5'-end phospho-adenosine-phospho-ribonucleoside in mRNA + beta-nicotinamide D-ribonucleotide + 2 H(+). It catalyses the reaction NAD(+) + H2O = beta-nicotinamide D-ribonucleotide + AMP + 2 H(+). The enzyme catalyses NADH + H2O = reduced beta-nicotinamide D-ribonucleotide + AMP + 2 H(+). Functionally, mRNA decapping enzyme that specifically removes the nicotinamide adenine dinucleotide (NAD) cap from a subset of mRNAs by hydrolyzing the diphosphate linkage to produce nicotinamide mononucleotide (NMN) and 5' monophosphate mRNA. The NAD-cap is present at the 5'-end of some mRNAs and stabilizes RNA against 5'-processing. Has preference for mRNAs with a 5'-end purine. Catalyzes the hydrolysis of a broad range of dinucleotide pyrophosphates. The chain is NAD-capped RNA hydrolase NudC from Vibrio vulnificus (strain CMCP6).